Here is a 705-residue protein sequence, read N- to C-terminus: SPbeta prophage-derived sublancin-168-processing and transport ATP-binding protein SunT (705 aa).

A Peptidase C39 domain is found at 12–138 (QFNSHDCGLA…SKFTNFILEI (127 aa)). Residue Cys18 is part of the active site. A run of 6 helical transmembrane segments spans residues 167–187 (IVFV…AGSF), 205–225 (LITI…FDFV), 281–301 (ANFV…VILY), 306–326 (ILFL…ILFF), 388–408 (VISN…IILW), and 418–438 (SMSL…LSSL). The region spanning 168 to 450 (VFVILLTSLF…ILSMQSDLQQ (283 aa)) is the ABC transmembrane type-1 domain. In terms of domain architecture, ABC transporter spans 483 to 705 (IKTVNLNIGA…SYSENKEYSI (223 aa)). 516-523 (GESGTGKS) provides a ligand contact to ATP.

Belongs to the ABC transporter superfamily. SunT family. Homodimer.

It localises to the cell membrane. In terms of biological role, sunT (TC 3.A.1.112.4) is required for production of the lantibiotic sublancin-168, probably by both processing the signal peptide and exporting the resulting mature lantibiotic. The sequence is that of SPbeta prophage-derived sublancin-168-processing and transport ATP-binding protein SunT (sunT) from Bacillus subtilis (strain 168).